The following is a 342-amino-acid chain: Prenyl transferase penC (342 aa).

Residues 17 to 37 (LSYLTLTVGALALVVVLYISI) traverse the membrane as a helical segment. His110 lines the isopentenyl diphosphate pocket. 2 residues coordinate Mg(2+): Asp117 and Asp121. Dimethylallyl diphosphate is bound at residue Arg126. Residue Asn154 is glycosylated (N-linked (GlcNAc...) asparagine). Dimethylallyl diphosphate is bound at residue Lys210.

It belongs to the FPP/GGPP synthase family.

The protein localises to the membrane. Its pathway is secondary metabolite biosynthesis. Its function is as follows. Prenyl transferase; part of the gene cluster that mediates the biosynthesis of the indole diterpenes penitrems. The geranylgeranyl diphosphate (GGPP) synthase penG catalyzes the first step in penitrem biosynthesis via conversion of farnesyl pyrophosphate and isopentyl pyrophosphate into geranylgeranyl pyrophosphate (GGPP). Condensation of indole-3-glycerol phosphate with GGPP by the prenyl transferase penC then forms 3-geranylgeranylindole (3-GGI). Epoxidation by the FAD-dependent monooxygenase penM leads to a epoxidized-GGI that is substrate of the terpene cyclase penB for cyclization to yield paspaline. Paspaline is subsequently converted to 13-desoxypaxilline by the cytochrome P450 monooxygenase penP, the latter being then converted to paxilline by the cytochrome P450 monooxygenase penQ. Paxilline is converted to beta-paxitriol via C-10 ketoreduction by the short-chain dehydrogenase PC-15 which can be monoprenylated at the C-20 by the indole diterpene prenyltransferase penD. A two-step elimination (acetylation and elimination) process performed by the O-acetyltransferase PC-16 and the P.simplicissimum ptmI-ortholog not yet identified in P.crustosum, leads to the production of the prenylated form of penijanthine. The FAD-linked oxidoreductase ptmO then converts the prenylated form of penijanthine into PC-M5 which is in turn transformed into PC-M4 by the aromatic dimethylallyltransferase PC-22. A series of oxidation steps involving 4 cytochrome P450 monooxygenases (PC-21, PC-05, PC-23, PC-20) and a FAD-dependent monooxygenase (PC-14) are required for the transformation of PC-M4 to penitrems A and E. Synthesis of these final products is proposed to proceed via penitrems D and C (PC-21, PC-05, PC-14) and penitrems B and F (PC-21, PC-05, PC-14, PC-23). In Penicillium crustosum (Blue mold fungus), this protein is Prenyl transferase penC.